The chain runs to 76 residues: Small ribosomal subunit protein bS21C (76 aa).

The disordered stretch occupies residues 52-76; the sequence is GRQRKLARKQMQREGLLPTKPRKDK.

It belongs to the bacterial ribosomal protein bS21 family.

The polypeptide is Small ribosomal subunit protein bS21C (rpsU3) (Agrobacterium fabrum (strain C58 / ATCC 33970) (Agrobacterium tumefaciens (strain C58))).